The primary structure comprises 147 residues: UPF0306 protein YPK_3704 (147 aa).

This sequence belongs to the UPF0306 family.

This Yersinia pseudotuberculosis serotype O:3 (strain YPIII) protein is UPF0306 protein YPK_3704.